A 112-amino-acid chain; its full sequence is uncharacterized protein (112 aa).

It to Buchnera BU585.

This is an uncharacterized protein from Buchnera aphidicola subsp. Schizaphis graminum (strain Sg).